A 238-amino-acid polypeptide reads, in one-letter code: Ankyrin repeat domain-containing protein 49 (238 aa).

Residue serine 48 is modified to Phosphoserine. ANK repeat units lie at residues 77–105 (LLWAAEKNRLTTVQRLLSERATHVNTRDE), 106–135 (DKYTPLHRAAYNGHLDVVRELIAHGADVHA), 139–168 (DGWTPLHSACKWNNARVASFLLQHDADVNA), and 172–205 (GLLTPLHLAAGNRDSKDTLELLLMNRYIKPGLKN).

The protein resides in the nucleus. Its function is as follows. May have a role in spermatogenesis where it promotes autophagy in response to serum starvation, via the NF-kappaB pathway. This chain is Ankyrin repeat domain-containing protein 49 (ANKRD49), found in Bos taurus (Bovine).